Consider the following 483-residue polypeptide: 6-phosphogluconate dehydrogenase, decarboxylating (483 aa).

NADP(+) is bound by residues 10 to 15 (GLAVMG) and 33 to 35 (NRT). The residue at position 38 (lysine 38) is an N6-acetyllysine. Serine 57 is modified (phosphoserine). The residue at position 59 (lysine 59) is an N6-acetyllysine. Residues 75-77 (VKA) and asparagine 103 each bind NADP(+). Residues asparagine 103 and 129 to 131 (SGG) each bind substrate. Residue serine 129 is modified to Phosphoserine. Catalysis depends on lysine 184, which acts as the Proton acceptor. Residue 187–188 (HN) participates in substrate binding. Catalysis depends on glutamate 191, which acts as the Proton donor. Substrate-binding residues include tyrosine 192, lysine 261, arginine 288, arginine 447, and histidine 453. Residue 478-481 (SSSY) participates in NADP(+) binding.

It belongs to the 6-phosphogluconate dehydrogenase family. Homodimer.

The protein localises to the cytoplasm. It carries out the reaction 6-phospho-D-gluconate + NADP(+) = D-ribulose 5-phosphate + CO2 + NADPH. It participates in carbohydrate degradation; pentose phosphate pathway; D-ribulose 5-phosphate from D-glucose 6-phosphate (oxidative stage): step 3/3. Its function is as follows. Catalyzes the oxidative decarboxylation of 6-phosphogluconate to ribulose 5-phosphate and CO(2), with concomitant reduction of NADP to NADPH. The chain is 6-phosphogluconate dehydrogenase, decarboxylating (Pgd) from Mus musculus (Mouse).